Here is a 307-residue protein sequence, read N- to C-terminus: Chaperone protein DnaJ 2 (307 aa).

One can recognise a J domain in the interval 6 to 71 (NYYQILGVPR…TKRRELDSRL (66 aa)). A disordered region spans residues 69 to 133 (SRLFGRFRRP…TRRTKVVSPA (65 aa)). The span at 88–99 (NGGRSPNGTSVN) shows a compositional bias: polar residues. The span at 100–114 (GQVRTPTGRTGTRQP) shows a compositional bias: low complexity.

The protein belongs to the DnaJ family. As to quaternary structure, homodimer. Requires Zn(2+) as cofactor.

Its subcellular location is the cytoplasm. In terms of biological role, participates actively in the response to hyperosmotic and heat shock by preventing the aggregation of stress-denatured proteins and by disaggregating proteins, also in an autonomous, DnaK-independent fashion. Unfolded proteins bind initially to DnaJ; upon interaction with the DnaJ-bound protein, DnaK hydrolyzes its bound ATP, resulting in the formation of a stable complex. GrpE releases ADP from DnaK; ATP binding to DnaK triggers the release of the substrate protein, thus completing the reaction cycle. Several rounds of ATP-dependent interactions between DnaJ, DnaK and GrpE are required for fully efficient folding. Also involved, together with DnaK and GrpE, in the DNA replication of plasmids through activation of initiation proteins. The protein is Chaperone protein DnaJ 2 (dnaJ2) of Synechocystis sp. (strain ATCC 27184 / PCC 6803 / Kazusa).